The following is a 549-amino-acid chain: Probable protein kinase UbiB (549 aa).

A Protein kinase domain is found at 123–501; that stretch reads DFNETPLASA…QQQAHKSNYL (379 aa). ATP-binding positions include 129–137 and Lys152; that span reads LASASISQV. Asp287 acts as the Proton acceptor in catalysis. 2 consecutive transmembrane segments (helical) span residues 496-516 and 520-540; these read HKSNYLLITSAVLLICGTLLI and ATLWTPYVCLVSGIILWFVGW.

This sequence belongs to the ABC1 family. UbiB subfamily.

The protein resides in the cell inner membrane. It participates in cofactor biosynthesis; ubiquinone biosynthesis [regulation]. In terms of biological role, is probably a protein kinase regulator of UbiI activity which is involved in aerobic coenzyme Q (ubiquinone) biosynthesis. In Shewanella baltica (strain OS185), this protein is Probable protein kinase UbiB.